The following is an 87-amino-acid chain: DNA-directed RNA polymerase subunit omega (87 aa).

This sequence belongs to the RNA polymerase subunit omega family. In terms of assembly, the RNAP catalytic core consists of 2 alpha, 1 beta, 1 beta' and 1 omega subunit. When a sigma factor is associated with the core the holoenzyme is formed, which can initiate transcription.

It catalyses the reaction RNA(n) + a ribonucleoside 5'-triphosphate = RNA(n+1) + diphosphate. Promotes RNA polymerase assembly. Latches the N- and C-terminal regions of the beta' subunit thereby facilitating its interaction with the beta and alpha subunits. The chain is DNA-directed RNA polymerase subunit omega from Pseudomonas syringae pv. syringae (strain B728a).